Here is a 116-residue protein sequence, read N- to C-terminus: Non-specific lipid-transfer protein C, cotyledon-specific isoform (116 aa).

The first 24 residues, 1-24 (MKNVVFSVLLLLSFLFCLANTNEA), serve as a signal peptide directing secretion. Disulfide bonds link Cys-28–Cys-76, Cys-38–Cys-53, Cys-54–Cys-98, and Cys-74–Cys-112.

It belongs to the plant LTP family.

Plant non-specific lipid-transfer proteins transfer phospholipids as well as galactolipids across membranes. May play a role in wax or cutin deposition in the cell walls of expanding epidermal cells and certain secretory tissues. The polypeptide is Non-specific lipid-transfer protein C, cotyledon-specific isoform (Ricinus communis (Castor bean)).